We begin with the raw amino-acid sequence, 787 residues long: Protein translocase subunit SecA (787 aa).

Residues Q85, 103 to 107 (GEGKT), and D492 contribute to the ATP site.

The protein belongs to the SecA family. In terms of assembly, monomer and homodimer. Part of the essential Sec protein translocation apparatus which comprises SecA, SecYEG and auxiliary proteins SecDF. Other proteins may also be involved.

The protein resides in the cell membrane. It is found in the cytoplasm. It carries out the reaction ATP + H2O + cellular proteinSide 1 = ADP + phosphate + cellular proteinSide 2.. Functionally, part of the Sec protein translocase complex. Interacts with the SecYEG preprotein conducting channel. Has a central role in coupling the hydrolysis of ATP to the transfer of proteins into and across the cell membrane, serving as an ATP-driven molecular motor driving the stepwise translocation of polypeptide chains across the membrane. The chain is Protein translocase subunit SecA from Lactiplantibacillus plantarum (strain ATCC BAA-793 / NCIMB 8826 / WCFS1) (Lactobacillus plantarum).